Consider the following 431-residue polypeptide: tRNA(Ile)-lysidine synthase (431 aa).

25 to 30 (SGGLDS) is a binding site for ATP.

Belongs to the tRNA(Ile)-lysidine synthase family.

It is found in the cytoplasm. It carries out the reaction cytidine(34) in tRNA(Ile2) + L-lysine + ATP = lysidine(34) in tRNA(Ile2) + AMP + diphosphate + H(+). In terms of biological role, ligates lysine onto the cytidine present at position 34 of the AUA codon-specific tRNA(Ile) that contains the anticodon CAU, in an ATP-dependent manner. Cytidine is converted to lysidine, thus changing the amino acid specificity of the tRNA from methionine to isoleucine. In Legionella pneumophila (strain Paris), this protein is tRNA(Ile)-lysidine synthase.